The primary structure comprises 195 residues: MDFIKSLVENKLLLIGNFVLTSGKISPYYLDLRRLSNYYEIFSDTVNKAIDKIKNIDFDMIIGIATGGIPFASFISCRMGKPLGYIRMEKKGYGTDKILEADVSGRKILLVDDVATTGGSLSKAVEIINSEGGRVVASLVIVDREEGAEKKLGEYGVKLISVYKIREILEYLLNSSLISDNDKNNIKEYLVKNIE.

Residues Arg87, Lys91, and 112 to 120 (DDVATTGGS) contribute to the 5-phospho-alpha-D-ribose 1-diphosphate site. Residues Thr116 and Arg144 each coordinate orotate.

It belongs to the purine/pyrimidine phosphoribosyltransferase family. PyrE subfamily. As to quaternary structure, homodimer. The cofactor is Mg(2+).

It carries out the reaction orotidine 5'-phosphate + diphosphate = orotate + 5-phospho-alpha-D-ribose 1-diphosphate. It participates in pyrimidine metabolism; UMP biosynthesis via de novo pathway; UMP from orotate: step 1/2. In terms of biological role, catalyzes the transfer of a ribosyl phosphate group from 5-phosphoribose 1-diphosphate to orotate, leading to the formation of orotidine monophosphate (OMP). The polypeptide is Orotate phosphoribosyltransferase (Sulfurisphaera tokodaii (strain DSM 16993 / JCM 10545 / NBRC 100140 / 7) (Sulfolobus tokodaii)).